Reading from the N-terminus, the 350-residue chain is Vancomycin C-type resistance protein VanC2 (350 aa).

Catalysis depends on residues Glu-14 and Ser-187. An ATP-grasp domain is found at 141–343 (HQAAAAIGVQ…YQELLQKLLV (203 aa)). 171–226 (IQTHGFPVFFKPNEAGSSKGITKVTCVEEIASALKEAFTYCSAVLLQKNIAGVEIG) lines the ATP pocket. Asp-297, Glu-310, and Asn-312 together coordinate Mg(2+). Mn(2+)-binding residues include Asp-297, Glu-310, and Asn-312. Ser-321 is an active-site residue.

This sequence belongs to the D-alanine--D-alanine ligase family. As to quaternary structure, homodimer. Mg(2+) is required as a cofactor. Requires Mn(2+) as cofactor.

The protein localises to the cell membrane. It catalyses the reaction D-serine + D-alanine + ATP = D-alanyl-D-serine + ADP + phosphate + H(+). It functions in the pathway cell wall biogenesis; peptidoglycan biosynthesis. Inhibited by D-cycloserine. Functionally, required for low-level resistance to the glycopeptide antibiotic vancomycin. D-alanine--D-alanine ligase of altered specificity, which catalyzes synthesis of D-Ala-D-Ser; produces a peptidoglycan which does not terminate in D-alanine but in D-serine, thus probably reducing affinity for vancomycin. Only insignificant catalytic synthesis of D-Ala-D-Ala in vitro. The chain is Vancomycin C-type resistance protein VanC2 from Enterococcus casseliflavus (Enterococcus flavescens).